Consider the following 243-residue polypeptide: PHO85 cyclin-like protein psl1 (243 aa).

A compositionally biased stretch (polar residues) spans 211-224 (ESPISHTPQQNQQD). The segment at 211–231 (ESPISHTPQQNQQDEQPRRPI) is disordered.

It belongs to the cyclin family. PHO80 subfamily. As to quaternary structure, forms a cyclin-CDK complex with pef1.

The protein resides in the cytoplasm. It is found in the nucleus. Cyclin partner of the cyclin-dependent kinase (CDK) pef1 (PHO85 homolog). This is PHO85 cyclin-like protein psl1 (psl1) from Schizosaccharomyces pombe (strain 972 / ATCC 24843) (Fission yeast).